The sequence spans 533 residues: MEIAREKSGAKSECIDSGEETLRESIVIFDFGSQYSLLIARRIREMHVYCELVSHDTPWEKIAHLNPRGFILSGGPSSVYEPEAPLAPAYIFESKLPVLGICYGMQAITQQLGGVVEHSDKREYGHALLHSNVINTELLADMPEPSPVWMSHGDRIEKLPAGFKSLAYTENCPVAVMGNESDIYGLQFHPEVVHSPHGKIILKNFVFNICKCHANWTMGNYIQESIQNIREQVGDGQVICALSGGVDSAVVASLIHKAIGDQLTCIYVNNGLLRREEADRTLHVFKNHMGMKIIYVDAIDRFLESLGGITDPEQKRKVIGSEFIKVFEDEACKLGQIDFLAQGTLYPDVIESVSSVSKASAKIKSHHNVGGLPAHMKLKLIEPLRYLFKDEVRLLGKELGLPDEMIWRQPFPGPGLAIRIIGEVTREKLEILRSADWIVMSEIKKAKMYHQVWQSFAILTDVKSVGVMGDFRTYGYLVAIRAVTSEDAMTADWAKLPYDLLSIISNRIVNEVKEVNRVVYDISSKPPSTIEWE.

The 191-residue stretch at 25 to 215 (SIVIFDFGSQ…VFNICKCHAN (191 aa)) folds into the Glutamine amidotransferase type-1 domain. Cysteine 102 acts as the Nucleophile in catalysis. Residues histidine 189 and glutamate 191 contribute to the active site. Residues 216 to 408 (WTMGNYIQES…LGLPDEMIWR (193 aa)) form the GMPS ATP-PPase domain. 243–249 (SGGVDSA) is an ATP binding site.

In terms of assembly, homodimer.

It carries out the reaction XMP + L-glutamine + ATP + H2O = GMP + L-glutamate + AMP + diphosphate + 2 H(+). Its pathway is purine metabolism; GMP biosynthesis; GMP from XMP (L-Gln route): step 1/1. Catalyzes the synthesis of GMP from XMP. The sequence is that of GMP synthase [glutamine-hydrolyzing] from Dehalococcoides mccartyi (strain CBDB1).